We begin with the raw amino-acid sequence, 173 residues long: Chorion protein S19 (173 aa).

Residues 1-21 (MNKFATLAVIFCACIVGSCYA) form the signal peptide.

This sequence belongs to the chorion protein S19 family.

The protein resides in the secreted. Chorion membrane (egg shell) protein; plays a role in protecting the egg from the environment. This Drosophila melanogaster (Fruit fly) protein is Chorion protein S19 (Cp19).